The primary structure comprises 483 residues: GTPase Der (483 aa).

EngA-type G domains are found at residues 3–167 (FTLA…GEER) and 212–387 (LRIA…EIWN). Residues 9–16 (GRPNVGKS), 56–60 (DTAGL), 119–122 (NKAE), 218–225 (GRPNAGKS), 265–269 (DTAGM), and 330–333 (NKWD) each bind GTP. Residues 388-472 (RRISTGRLNR…PIRLSLRTSD (85 aa)) enclose the KH-like domain.

Belongs to the TRAFAC class TrmE-Era-EngA-EngB-Septin-like GTPase superfamily. EngA (Der) GTPase family. Associates with the 50S ribosomal subunit.

GTPase that plays an essential role in the late steps of ribosome biogenesis. This is GTPase Der from Brucella melitensis biotype 2 (strain ATCC 23457).